The following is a 256-amino-acid chain: 5-keto-4-deoxy-D-glucarate aldolase (256 aa).

H50 (proton acceptor) is an active-site residue. Substrate is bound at residue Q151. E153 contributes to the Mg(2+) binding site. Residues S178 and D179 each coordinate substrate. A Mg(2+)-binding site is contributed by D179.

It belongs to the HpcH/HpaI aldolase family. KDGluc aldolase subfamily. Homohexamer; trimer of dimers. Mg(2+) serves as cofactor.

It catalyses the reaction 5-dehydro-4-deoxy-D-glucarate = 2-hydroxy-3-oxopropanoate + pyruvate. It carries out the reaction 2-dehydro-3-deoxy-D-glucarate = 2-hydroxy-3-oxopropanoate + pyruvate. The protein operates within carbohydrate acid metabolism; galactarate degradation; D-glycerate from galactarate: step 2/3. Functionally, catalyzes the reversible retro-aldol cleavage of both 5-keto-4-deoxy-D-glucarate and 2-keto-3-deoxy-D-glucarate to pyruvate and tartronic semialdehyde. This is 5-keto-4-deoxy-D-glucarate aldolase from Salmonella gallinarum (strain 287/91 / NCTC 13346).